The primary structure comprises 929 residues: LPS-assembly protein LptD (929 aa).

The N-terminal stretch at Met1–Ala33 is a signal peptide. Positions Asn58–Gly101 are disordered. Residues Thr66 to Glu90 are compositionally biased toward low complexity.

It belongs to the LptD family. Component of the lipopolysaccharide transport and assembly complex. Interacts with LptE and LptA.

The protein resides in the cell outer membrane. Its function is as follows. Together with LptE, is involved in the assembly of lipopolysaccharide (LPS) at the surface of the outer membrane. This is LPS-assembly protein LptD from Pseudomonas aeruginosa (strain LESB58).